A 159-amino-acid polypeptide reads, in one-letter code: uncharacterized protein (159 aa).

Residues H44, H124, and H128 each contribute to the a divalent metal cation site.

It belongs to the DinB family.

This is an uncharacterized protein from Bacillus subtilis (strain 168).